A 512-amino-acid chain; its full sequence is MSRLFLVLDTGAAVLLVALLFVVYRGRQSARGPLPPGPRGWPLVGNVFDMPSTNEWNTYMSWGEKWGDIVSVTLFGQHIVILNSVQHAYDMFEKKSNIYSDRPVITMAGEMVGWDRTLAVLRYGKRFRETRKLFSQLIGTRNHAERFSHHLEHEVHQFLRRVLREPTSLLKEVRKTTGAVILKMAYGYEVQEGDDPLVDLVDRAVEEFSISTRPGAFLVDTLPVLRHVPAWIPGAGWKKKAQVWADDLEMTCNVPYAFTQQQMSAGTAIPSFTSAHLESNPDPEQEILIKNAAASLYSAGADTTVSAVSTFFLAMTCYPEAQRKAQAEIDAVIGNDRLPTLADRDKLPYVTALCWEVLRWQPVVPLGFPHCPVKDDIHAGYLIPKGTLVSPNIWKFLHDPDTYANPFDFEPERFIASPGKTAEKDPRQIVFGFGRRICPGMYLADASLFISCAMSLAVFDISKVVRDGKVIEPVIDYTSGTISHPRPFECSIKPRSANAEVLITAMHETREK.

The chain crosses the membrane as a helical span at residues 4-24 (LFLVLDTGAAVLLVALLFVVY). Cysteine 438 contacts heme.

It belongs to the cytochrome P450 family. Heme is required as a cofactor.

Its subcellular location is the membrane. Its pathway is secondary metabolite biosynthesis. In terms of biological role, cytochrome P450 monooxygenase that is able to use 7-ethoxycoumarin as a substrate for oxidation. This Postia placenta (strain ATCC 44394 / Madison 698-R) (Brown rot fungus) protein is Cytochrome P450 monooxygenase 208.